The sequence spans 408 residues: LL-diaminopimelate aminotransferase (408 aa).

2 residues coordinate substrate: Tyr-15 and Gly-42. Pyridoxal 5'-phosphate contacts are provided by residues Tyr-72, 108-109, Tyr-132, Asn-187, Tyr-218, and 246-248; these read SK and SFS. Substrate contacts are provided by Lys-109, Tyr-132, and Asn-187. Lys-249 carries the post-translational modification N6-(pyridoxal phosphate)lysine. Residues Arg-257 and Asn-292 each contribute to the pyridoxal 5'-phosphate site. Substrate contacts are provided by Asn-292 and Arg-388.

This sequence belongs to the class-I pyridoxal-phosphate-dependent aminotransferase family. LL-diaminopimelate aminotransferase subfamily. Homodimer. Pyridoxal 5'-phosphate is required as a cofactor.

It carries out the reaction (2S,6S)-2,6-diaminopimelate + 2-oxoglutarate = (S)-2,3,4,5-tetrahydrodipicolinate + L-glutamate + H2O + H(+). The protein operates within amino-acid biosynthesis; L-lysine biosynthesis via DAP pathway; LL-2,6-diaminopimelate from (S)-tetrahydrodipicolinate (aminotransferase route): step 1/1. Its function is as follows. Involved in the synthesis of meso-diaminopimelate (m-DAP or DL-DAP), required for both lysine and peptidoglycan biosynthesis. Catalyzes the direct conversion of tetrahydrodipicolinate to LL-diaminopimelate. The chain is LL-diaminopimelate aminotransferase from Leptospira borgpetersenii serovar Hardjo-bovis (strain L550).